The chain runs to 441 residues: Nucleoprotein (441 aa).

S5 carries the phosphoserine; by host modification. The CoV N NTD domain occupies 14 to 136; it reads VPLSLYAPLR…QLPSVVEIVE (123 aa). Residues 16–146 are RNA-binding; sequence LSLYAPLRVT…PNTPPASRAN (131 aa). Disordered regions lie at residues 131–219 and 231–278; these read VVEI…VTSR and KSLG…LKDI. S143 carries the post-translational modification Phosphoserine; by host. Residues 143–215 show a composition bias toward low complexity; it reads SRANSRSRSR…NRNQSNDRGG (73 aa). 2 stretches are compositionally biased toward basic and acidic residues: residues 238–255 and 269–278; these read NPDRHKQQQKPKQEKSDN and TSKERDLKDI. Positions 266–382 constitute a CoV N CTD domain; that stretch reads SRATSKERDL…AFKTGNAKLQ (117 aa). Residues 277–379 are dimerization; sequence DIPEWRRIPK…QVDAFKTGNA (103 aa).

It belongs to the alphacoronavirus nucleocapsid protein family. Homooligomer. Both monomeric and oligomeric forms interact with RNA. Interacts with protein M. Interacts with NSP3; this interaction serves to tether the genome to the newly translated replicase-transcriptase complex at a very early stage of infection. Interacts with host RSAD2; this interaction inhibits viral replication. ADP-ribosylated. The ADP-ribosylation is retained in the virion during infection. Post-translationally, phosphorylated on serine and threonine residues.

It is found in the virion. It localises to the host endoplasmic reticulum-Golgi intermediate compartment. Its subcellular location is the host Golgi apparatus. Its function is as follows. Packages the positive strand viral genome RNA into a helical ribonucleocapsid (RNP) and plays a fundamental role during virion assembly through its interactions with the viral genome and membrane protein M. Plays an important role in enhancing the efficiency of subgenomic viral RNA transcription as well as viral replication. In Porcine epidemic diarrhea virus (strain CV777) (PEDV), this protein is Nucleoprotein.